A 244-amino-acid chain; its full sequence is Putative nucleosome assembly protein C36B7.08c (244 aa).

A disordered region spans residues 199-244 (EAMTEEASDEDESVDLEEDEEEEDEEDEEGDEEKQEPPSKKSKKSN). Residues 201 to 232 (MTEEASDEDESVDLEEDEEEEDEEDEEGDEEK) show a composition bias toward acidic residues. A Phosphoserine modification is found at Ser211.

Belongs to the nucleosome assembly protein (NAP) family.

It localises to the nucleus. This chain is Putative nucleosome assembly protein C36B7.08c, found in Schizosaccharomyces pombe (strain 972 / ATCC 24843) (Fission yeast).